The following is a 243-amino-acid chain: rRNA adenine N-6-methyltransferase (243 aa).

6 residues coordinate S-adenosyl-L-methionine: asparagine 11, isoleucine 13, glycine 38, glutamate 59, aspartate 84, and asparagine 101.

The protein belongs to the class I-like SAM-binding methyltransferase superfamily. rRNA adenine N(6)-methyltransferase family.

The enzyme catalyses adenosine(2085) in 23S rRNA + 2 S-adenosyl-L-methionine = N(6)-dimethyladenosine(2085) in 23S rRNA + 2 S-adenosyl-L-homocysteine + 2 H(+). In terms of biological role, this protein produces a dimethylation of the adenine residue at position 2085 in 23S rRNA, resulting in reduced affinity between ribosomes and macrolide-lincosamide-streptogramin B antibiotics. The polypeptide is rRNA adenine N-6-methyltransferase (ermA1) (Staphylococcus aureus (strain Mu50 / ATCC 700699)).